We begin with the raw amino-acid sequence, 64 residues long: Large ribosomal subunit protein uL30 (64 aa).

This sequence belongs to the universal ribosomal protein uL30 family. In terms of assembly, part of the 50S ribosomal subunit.

The chain is Large ribosomal subunit protein uL30 from Methylorubrum extorquens (strain CM4 / NCIMB 13688) (Methylobacterium extorquens).